The primary structure comprises 470 residues: E3 ubiquitin-protein ligase TRAIP (470 aa).

The RING-type; atypical zinc finger occupies 7-50 (CTICSDFFDHSRDVAAIHCGHTFHLQCLIQWFETAPSRTCPQCR). The stretch at 76-277 (AEFLKNELDS…RKKLMILQGT (202 aa)) forms a coiled coil. The tract at residues 211 to 470 (LKEARKATGE…QPKLDTFLCQ (260 aa)) is interaction with CYLD. The PIP-box motif lies at 461-470 (QPKLDTFLCQ).

This sequence belongs to the TRAIP family. As to quaternary structure, interacts (via PIP-box) with PCNA. Binds TRAF1, TRAF2, TRAF3, TRAF5 and TRAF6 is part of the receptor-TRAF signaling complex. May interact with CYLD; the C-terminus interacts with CYLD, however the interaction was not detected with the full-length protein. Interacts with POLK and POLN. Interacts with UIMC1. Post-translationally, autoubiquitinated. In terms of processing, sumoylated; sumoylation is required for nuclear localization. Sumoylation increases protein stability, possibly by preventing ubiquitination. In terms of tissue distribution, detected in testis and thymus, and at lower levels in spleen.

The protein localises to the nucleus. Its subcellular location is the nucleoplasm. The protein resides in the nucleolus. It localises to the chromosome. It is found in the cytoplasm. The protein localises to the perinuclear region. It carries out the reaction S-ubiquitinyl-[E2 ubiquitin-conjugating enzyme]-L-cysteine + [acceptor protein]-L-lysine = [E2 ubiquitin-conjugating enzyme]-L-cysteine + N(6)-ubiquitinyl-[acceptor protein]-L-lysine.. Its pathway is protein modification; protein ubiquitination. Its function is as follows. E3 ubiquitin ligase required to protect genome stability in response to replication stress. Acts as a key regulator of interstrand cross-link repair, which takes place when both strands of duplex DNA are covalently tethered together, thereby blocking replication and transcription. During mitosis, controls the choice between the two pathways of replication-coupled interstrand-cross-link repair by mediating ubiquitination of MCM7 subunit of the CMG helicase complex. Short ubiquitin chains on MCM7 promote recruitment of DNA glycosylase NEIL3. If the interstrand cross-link cannot be cleaved by NEIL3, the ubiquitin chains continue to grow on MCM7, promoting the unloading of the CMG helicase complex by the VCP/p97 ATPase, enabling the Fanconi anemia DNA repair pathway. Only catalyzes ubiquitination of MCM7 when forks converge. Also involved in the repair of covalent DNA-protein cross-links (DPCs) during DNA synthesis: promotes ubiquitination of DPCs, leading to their degradation by the proteasome. Has also been proposed to play a role in promoting translesion synthesis by mediating the assembly of 'Lys-63'-linked poly-ubiquitin chains on the Y-family polymerase POLN in order to facilitate bypass of DNA lesions and preserve genomic integrity. The function in translesion synthesis is however controversial. Acts as a regulator of the spindle assembly checkpoint. Also acts as a negative regulator of innate immune signaling by inhibiting activation of NF-kappa-B mediated by TNF. Negatively regulates TLR3/4- and RIG-I-mediated IRF3 activation and subsequent IFNB1 production and cellular antiviral response by promoting 'Lys-48'-linked polyubiquitination of TNK1 leading to its proteasomal degradation. This Mus musculus (Mouse) protein is E3 ubiquitin-protein ligase TRAIP.